The chain runs to 419 residues: Dual specificity protein phosphatase 7 (419 aa).

A disordered region spans residues 1–41 (MKNQLRGPPVRAHMSTSGAAAAGGTRAGSEPGAGSGSSAGI). Low complexity predominate over residues 15-30 (STSGAAAAGGTRAGSE). Residues 31-41 (PGAGSGSSAGI) are compositionally biased toward gly residues. The Rhodanese domain occupies 68-187 (GGASLLLLDC…FQTEYSEHCE (120 aa)). Residues 216–240 (CSDGESDRELPSSATESDGSPVPSS) form a disordered region. Polar residues predominate over residues 227-240 (SSATESDGSPVPSS). The region spanning 244 to 387 (FPVQILPYLY…LLDFERTLGL (144 aa)) is the Tyrosine-protein phosphatase domain. Cys331 functions as the Phosphocysteine intermediate in the catalytic mechanism. 331 to 337 (CLAGISR) contacts substrate.

It belongs to the protein-tyrosine phosphatase family. Non-receptor class dual specificity subfamily. As to quaternary structure, interacts with MAPK1/ERK2; the interaction enhances DUSP7 phosphatase activity.

Its subcellular location is the cytoplasm. The catalysed reaction is O-phospho-L-tyrosyl-[protein] + H2O = L-tyrosyl-[protein] + phosphate. The enzyme catalyses O-phospho-L-seryl-[protein] + H2O = L-seryl-[protein] + phosphate. It carries out the reaction O-phospho-L-threonyl-[protein] + H2O = L-threonyl-[protein] + phosphate. Its activity is regulated as follows. Strongly inhibited by sodium orthovanadate. Dual specificity protein phosphatase. Shows high activity towards MAPK1/ERK2. Also has lower activity towards MAPK14 and MAPK8. In arrested oocytes, plays a role in meiotic resumption. Promotes nuclear envelope breakdown and activation of the CDK1/Cyclin-B complex in oocytes, probably by dephosphorylating and inactivating the conventional protein kinase C (cPKC) isozyme PRKCB. May also inactivate PRKCA and/or PRKCG. Also important in oocytes for normal chromosome alignment on the metaphase plate and progression to anaphase, where it might regulate activity of the spindle-assembly checkpoint (SAC) complex. The sequence is that of Dual specificity protein phosphatase 7 from Rattus norvegicus (Rat).